The primary structure comprises 457 residues: Asparagine--tRNA ligase (457 aa).

This sequence belongs to the class-II aminoacyl-tRNA synthetase family. Homodimer.

The protein localises to the cytoplasm. It catalyses the reaction tRNA(Asn) + L-asparagine + ATP = L-asparaginyl-tRNA(Asn) + AMP + diphosphate + H(+). The chain is Asparagine--tRNA ligase from Phytoplasma australiense.